The primary structure comprises 229 residues: Large ribosomal subunit protein uL1 (229 aa).

This sequence belongs to the universal ribosomal protein uL1 family. Part of the 50S ribosomal subunit.

Functionally, binds directly to 23S rRNA. The L1 stalk is quite mobile in the ribosome, and is involved in E site tRNA release. Protein L1 is also a translational repressor protein, it controls the translation of the L11 operon by binding to its mRNA. This chain is Large ribosomal subunit protein uL1, found in Streptococcus pneumoniae (strain JJA).